The sequence spans 1398 residues: MAP-homologous protein 1 (1398 aa).

N-acetylmethionine is present on M1. A disordered region spans residues G21 to G77. Residues S27–P36 are compositionally biased toward polar residues. Residues S63–S73 show a composition bias toward low complexity. A Phosphoserine modification is found at S81. Disordered regions lie at residues N90 to P144, H156 to I186, and T191 to Y210. 2 stretches are compositionally biased toward polar residues: residues Q91–T102 and V114–E123. The segment covering K159–I186 has biased composition (basic and acidic residues). Residue K221 forms a Glycyl lysine isopeptide (Lys-Gly) (interchain with G-Cter in ubiquitin) linkage. The residue at position 222 (T222) is a Phosphothreonine. 4 disordered regions span residues H244–R270, S296–H382, G395–E428, and N515–Q548. Phosphoserine is present on residues S309, S311, S354, and S357. Residues S357 to S371 show a composition bias toward low complexity. Over residues A372–S381 the composition is skewed to polar residues. Residues N396 to S426 show a composition bias toward low complexity. Residues A521–E538 show a composition bias toward basic and acidic residues. T577 is modified (phosphothreonine). The segment covering S605 to S615 has biased composition (low complexity). 3 disordered regions span residues S605–P630, L1148–E1169, and D1203–V1223. Polar residues predominate over residues G1160 to E1169. A compositionally biased stretch (basic and acidic residues) spans V1208–V1223. Residues D1227–L1258 form a tau/MAP repeat-like region. Residues Q1313–N1372 form a disordered region. Residues Q1325–S1337 are compositionally biased toward low complexity. Positions P1338–N1355 are enriched in polar residues.

It localises to the cytoplasm. It is found in the cytoskeleton. The protein localises to the spindle. Essential for the formation and/or stabilization of microtubules. Binds to microtubules in vitro. The polypeptide is MAP-homologous protein 1 (MHP1) (Saccharomyces cerevisiae (strain ATCC 204508 / S288c) (Baker's yeast)).